The chain runs to 97 residues: Secreted LysM effector Mg1LysM (97 aa).

Residues 1–18 (MQFTALVAALLSVAAVQA) form the signal peptide. The LysM domain occupies 37–84 (QQYVARSGDTLTKIAQEIYHDVVGVCDIARANNLADPNRIDAGTPYTI). Gly-44, Thr-48, Asn-74, and Ile-76 together coordinate chitin.

The protein belongs to the secreted LysM effector family. As to quaternary structure, forms homodimers in a chitin-independent manner through interactions at the N-termini of Mg1LysM monomers. Homodimers are further polymerized in a chitin-dependent manner.

The protein localises to the secreted. Its subcellular location is the cell wall. Secreted effector that enables the plant pathogenic fungus to manipulate host defenses for successful infection. Binds chitin but not cellulose or xylan. Chitin-induced polymerization of homodimers forms a contiguous Mg1LysM highly oligomeric super-complexe that is anchored to the chitin in the fungal cell wall to prevent hydrolysis by host chitinases. This is Secreted LysM effector Mg1LysM from Zymoseptoria tritici (strain ST99CH_3D7).